The sequence spans 495 residues: Ectonucleoside triphosphate diphosphohydrolase 8 (495 aa).

Residues 1 to 8 lie on the Cytoplasmic side of the membrane; that stretch reads MGLSRKEQ. The chain crosses the membrane as a helical span at residues 9 to 29; the sequence is VFLALLGASGVSGLTALILLL. The Extracellular segment spans residues 30–471; the sequence is VEATSVLLPT…AESYGVWVAK (442 aa). Asparagine 67 is a glycosylation site (N-linked (GlcNAc...) asparagine). An intrachain disulfide couples cysteine 78 to cysteine 102. The active-site Proton acceptor is the glutamate 168. Cysteine 246 and cysteine 292 form a disulfide bridge. A glycan (N-linked (GlcNAc...) asparagine) is linked at asparagine 304. An intrachain disulfide couples cysteine 329 to cysteine 335. An N-linked (GlcNAc...) asparagine glycan is attached at asparagine 363. A disulfide bond links cysteine 381 and cysteine 403. A helical transmembrane segment spans residues 472–492; that stretch reads VVFMVLALVAVVGAALVQLFW. At 493 to 495 the chain is on the cytoplasmic side; it reads LQD.

This sequence belongs to the GDA1/CD39 NTPase family. It depends on Ca(2+) as a cofactor. Requires Mg(2+) as cofactor. N-glycosylated.

It is found in the cell membrane. The catalysed reaction is a ribonucleoside 5'-triphosphate + 2 H2O = a ribonucleoside 5'-phosphate + 2 phosphate + 2 H(+). With respect to regulation, not inhibited by ARL 67156. Its function is as follows. Canalicular ectonucleoside NTPDase responsible for the main hepatic NTPDase activity. Ectonucleoside NTPDases catalyze the hydrolysis of gamma- and beta-phosphate residues of nucleotides, playing a central role in concentration of extracellular nucleotides. Has activity toward ATP, ADP, UTP and UDP, but not toward AMP. The protein is Ectonucleoside triphosphate diphosphohydrolase 8 (ENTPD8) of Homo sapiens (Human).